A 247-amino-acid polypeptide reads, in one-letter code: tRNA pseudouridine synthase A 1 (247 aa).

D53 acts as the Nucleophile in catalysis. Position 111 (Y111) interacts with substrate.

Belongs to the tRNA pseudouridine synthase TruA family. In terms of assembly, homodimer.

It carries out the reaction uridine(38/39/40) in tRNA = pseudouridine(38/39/40) in tRNA. In terms of biological role, formation of pseudouridine at positions 38, 39 and 40 in the anticodon stem and loop of transfer RNAs. This is tRNA pseudouridine synthase A 1 from Bacillus cereus (strain ATCC 14579 / DSM 31 / CCUG 7414 / JCM 2152 / NBRC 15305 / NCIMB 9373 / NCTC 2599 / NRRL B-3711).